A 206-amino-acid polypeptide reads, in one-letter code: Large ribosomal subunit protein mL62 (206 aa).

The transit peptide at 1 to 29 (MATAWCLPWTLRRAGAWLLTPPLRCPRRA) directs the protein to the mitochondrion.

It belongs to the prokaryotic/mitochondrial release factor family. Mitochondrion-specific ribosomal protein mL62 subfamily. In terms of assembly, component of the mitochondrial 39S ribosomal subunit.

The protein resides in the mitochondrion. The enzyme catalyses an N-acyl-L-alpha-aminoacyl-tRNA + H2O = an N-acyl-L-amino acid + a tRNA + H(+). Essential peptidyl-tRNA hydrolase component of the mitochondrial large ribosomal subunit. Acts as a codon-independent translation release factor that has lost all stop codon specificity and directs the termination of translation in mitochondrion, possibly in case of abortive elongation. May be involved in the hydrolysis of peptidyl-tRNAs that have been prematurely terminated and thus in the recycling of stalled mitochondrial ribosomes. This Ailuropoda melanoleuca (Giant panda) protein is Large ribosomal subunit protein mL62.